The primary structure comprises 391 residues: Formate-dependent phosphoribosylglycinamide formyltransferase (391 aa).

Residues 20-21 (EL) and E80 each bind N(1)-(5-phospho-beta-D-ribosyl)glycinamide. ATP is bound by residues R112, K153, 158 to 163 (SSGKGQ), 193 to 196 (EGFI), and E201. The region spanning 117–306 (RLAAEDLQIP…EFALHVRAFL (190 aa)) is the ATP-grasp domain. Mg(2+)-binding residues include E265 and E277. N(1)-(5-phospho-beta-D-ribosyl)glycinamide contacts are provided by residues D284, K354, and 361–362 (RR).

Belongs to the PurK/PurT family. In terms of assembly, homodimer.

The catalysed reaction is N(1)-(5-phospho-beta-D-ribosyl)glycinamide + formate + ATP = N(2)-formyl-N(1)-(5-phospho-beta-D-ribosyl)glycinamide + ADP + phosphate + H(+). It functions in the pathway purine metabolism; IMP biosynthesis via de novo pathway; N(2)-formyl-N(1)-(5-phospho-D-ribosyl)glycinamide from N(1)-(5-phospho-D-ribosyl)glycinamide (formate route): step 1/1. In terms of biological role, involved in the de novo purine biosynthesis. Catalyzes the transfer of formate to 5-phospho-ribosyl-glycinamide (GAR), producing 5-phospho-ribosyl-N-formylglycinamide (FGAR). Formate is provided by PurU via hydrolysis of 10-formyl-tetrahydrofolate. In Photobacterium profundum (strain SS9), this protein is Formate-dependent phosphoribosylglycinamide formyltransferase.